The following is a 272-amino-acid chain: uncharacterized protein (272 aa).

The protein resides in the periplasm. Its function is as follows. May be involved in ulvan degradation. Ulvan is the main polysaccharide component of the Ulvales (green seaweed) cell wall. It is composed of disaccharide building blocks comprising 3-sulfated rhamnose (Rha3S) linked to D-glucuronic acid (GlcA), L-iduronic acid (IduA), or D-xylose (Xyl). This is an uncharacterized protein from Formosa agariphila (strain DSM 15362 / KCTC 12365 / LMG 23005 / KMM 3901 / M-2Alg 35-1).